The primary structure comprises 2156 residues: Oxygen-regulated protein 1 (2156 aa).

Residues 1-19 (MSDTPSTGFSIIHPTSSEG) show a composition bias toward polar residues. Residues 1-25 (MSDTPSTGFSIIHPTSSEGQVPPPR) are disordered. Doublecortin domains are found at residues 36-118 (KRIS…VDLD) and 154-233 (RSLV…GNYD). Disordered stretches follow at residues 353–375 (VSKT…RTES), 666–686 (SSVA…SRYQ), 1438–1458 (DMEE…MTSS), and 1590–1621 (DWSD…TQEK).

Interacts (via the doublecortin domains) with microtubules. Interacts with RP1L1. Interacts with MAK. As to expression, expressed in retina. Not expressed in heart, brain, placenta, lung, liver, skeletal muscle, kidney, spleen and pancreas.

The protein resides in the cytoplasm. The protein localises to the cytoskeleton. Its subcellular location is the cilium axoneme. It localises to the cell projection. It is found in the cilium. The protein resides in the photoreceptor outer segment. Its function is as follows. Microtubule-associated protein regulating the stability and length of the microtubule-based axoneme of photoreceptors. Required for the differentiation of photoreceptor cells, it plays a role in the organization of the outer segment of rod and cone photoreceptors ensuring the correct orientation and higher-order stacking of outer segment disks along the photoreceptor axoneme. In Homo sapiens (Human), this protein is Oxygen-regulated protein 1 (RP1).